Here is a 315-residue protein sequence, read N- to C-terminus: Histone-lysine N-methyltransferase SETMAR (315 aa).

Positions 74 to 137 constitute a Pre-SET domain; the sequence is PGCACIKTPC…HCRNRVVQSG (64 aa). Residues Cys-76, Cys-78, Cys-83, Cys-88, Cys-90, Cys-119, Cys-123, Cys-125, and Cys-129 each contribute to the Zn(2+) site. The 125-residue stretch at 140–264 folds into the SET domain; it reads FLLQVFQTEK…PGEELSYDYS (125 aa). S-adenosyl-L-methionine-binding positions include 150–152, Tyr-193, Arg-221, and 224–225; these read KGW and NH. The Zn(2+) site is built by Cys-227, Cys-288, Cys-290, and Cys-295. The Post-SET domain occupies 284 to 300; sequence PRKPCYCGAQSCATFLP.

The protein belongs to the class V-like SAM-binding methyltransferase superfamily.

It localises to the nucleus. The protein resides in the chromosome. The catalysed reaction is L-lysyl(36)-[histone H3] + 2 S-adenosyl-L-methionine = N(6),N(6)-dimethyl-L-lysyl(36)-[histone H3] + 2 S-adenosyl-L-homocysteine + 2 H(+). Functionally, histone methyltransferase that methylates 'Lys-4' and 'Lys-36' of histone H3, 2 specific tags for epigenetic transcriptional activation. Specifically mediates dimethylation of H3 'Lys-36'. In Rattus norvegicus (Rat), this protein is Histone-lysine N-methyltransferase SETMAR.